The sequence spans 619 residues: TOX high mobility group box family member 4 (619 aa).

Disordered regions lie at residues 155 to 227 (LSLG…QKPV) and 306 to 335 (DPVPQSQTPSPPPVTAADPASPAPASTESP). At threonine 176 the chain carries Phosphothreonine. 2 positions are modified to phosphoserine: serine 178 and serine 182. The span at 183–193 (LHEDGVDDFRR) shows a compositional bias: basic and acidic residues. Basic residues predominate over residues 208–218 (KQKAPKKRKKK). A Nuclear localization signal motif is present at residues 213–218 (KKRKKK). A DNA-binding region (HMG box) is located at residues 223-291 (PQKPVSAYAL…EYLKALAAYK (69 aa)). Residue threonine 313 is modified to Phosphothreonine. Serine 315 carries the phosphoserine modification. Positions 320–335 (TAADPASPAPASTESP) are enriched in low complexity. Arginine 479 is subject to Asymmetric dimethylarginine. Phosphoserine occurs at positions 531, 548, 550, 558, 560, and 565.

As to quaternary structure, component of the PNUTS-PP1 phosphatase complex, composed of PPP1R10/PNUTS, TOX4, WDR82 and PPP1CA or PPP1CB or PPP1CC. Interacts with PPP1R10/PNUTS. Interacts with FOXO1 and CREB1 (increased by cAMP); FOXO1 and CREB1 are required for full induction of TOX4-dependent activity and the interactions are inhibited by insulin.

It localises to the nucleus. The protein localises to the chromosome. Its activity is regulated as follows. In liver, recruited to target gene promoters following treatment with dexamethasone and cAMP. Binding is decreased in presence of insulin. In terms of biological role, transcription factor that modulates cell fate reprogramming from the somatic state to the pluripotent and neuronal fate. In liver, controls the expression of hormone-regulated gluconeogenic genes such as G6PC1 and PCK1. This regulation is independent of the insulin receptor activation. Also acts as a regulatory component of protein phosphatase 1 (PP1) complexes. Component of the PNUTS-PP1 protein phosphatase complex, a PP1 complex that regulates RNA polymerase II transcription pause-release. PNUTS-PP1 also plays a role in the control of chromatin structure and cell cycle progression during the transition from mitosis into interphase. In Mus musculus (Mouse), this protein is TOX high mobility group box family member 4.